Reading from the N-terminus, the 495-residue chain is UDP-glycosyltransferase 73C10 (495 aa).

The active-site Proton acceptor is H24. H24 is a binding site for an anthocyanidin. D129 (charge relay) is an active-site residue. Positions 358, 373, 376, 377, 378, and 381 each coordinate UDP-alpha-D-glucose. G396 is a binding site for an anthocyanidin. UDP-alpha-D-glucose is bound by residues D397 and Q398.

It belongs to the UDP-glycosyltransferase family.

The enzyme catalyses oleanolate + UDP-alpha-D-glucose = oleanolate 3-O-beta-D-glucoside + UDP + H(+). Functionally, catalyzes the transfer of a glucose (Glc) moiety from UDP-Glc to the C-3 position of the oleanane sapogenins oleanolate and hederagenin, and to the C-28 carboxylic group of the lupane sapogenin betulinate. The monoglucosylated hederagenin 3-O-beta-D-glucoside is a feeding deterrent of the yellow-striped flea beetle (Phyllotreta nemorum). The polypeptide is UDP-glycosyltransferase 73C10 (Barbarea vulgaris (Yellow rocket)).